The sequence spans 456 residues: Adenylosuccinate lyase (456 aa).

Residues 15–16 (RY), 90–92 (NHD), and 122–123 (TS) each bind N(6)-(1,2-dicarboxyethyl)-AMP. Residue H171 is the Proton donor/acceptor of the active site. Q247 is a binding site for N(6)-(1,2-dicarboxyethyl)-AMP. The Proton donor/acceptor role is filled by S295. N(6)-(1,2-dicarboxyethyl)-AMP-binding positions include S296, 301–303 (KVN), N309, R335, and 340–344 (STVLR).

This sequence belongs to the lyase 1 family. Adenylosuccinate lyase subfamily. Homotetramer. Residues from neighboring subunits contribute catalytic and substrate-binding residues to each active site.

The catalysed reaction is N(6)-(1,2-dicarboxyethyl)-AMP = fumarate + AMP. The enzyme catalyses (2S)-2-[5-amino-1-(5-phospho-beta-D-ribosyl)imidazole-4-carboxamido]succinate = 5-amino-1-(5-phospho-beta-D-ribosyl)imidazole-4-carboxamide + fumarate. Its pathway is purine metabolism; AMP biosynthesis via de novo pathway; AMP from IMP: step 2/2. It functions in the pathway purine metabolism; IMP biosynthesis via de novo pathway; 5-amino-1-(5-phospho-D-ribosyl)imidazole-4-carboxamide from 5-amino-1-(5-phospho-D-ribosyl)imidazole-4-carboxylate: step 2/2. Its function is as follows. Catalyzes two reactions in de novo purine nucleotide biosynthesis. Catalyzes the breakdown of 5-aminoimidazole- (N-succinylocarboxamide) ribotide (SAICAR or 2-[5-amino-1-(5-phospho-beta-D-ribosyl)imidazole-4-carboxamido]succinate) to 5-aminoimidazole-4-carboxamide ribotide (AICAR or 5-amino-1-(5-phospho-beta-D-ribosyl)imidazole-4-carboxamide) and fumarate, and of adenylosuccinate (ADS or N(6)-(1,2-dicarboxyethyl)-AMP) to adenosine monophosphate (AMP) and fumarate. The protein is Adenylosuccinate lyase (purB) of Legionella pneumophila subsp. pneumophila (strain Philadelphia 1 / ATCC 33152 / DSM 7513).